We begin with the raw amino-acid sequence, 575 residues long: Triokinase/FMN cyclase (575 aa).

Positions 9 to 336 constitute a DhaK domain; sequence SVAGCADDAL…IDAETTAAAW (328 aa). Dihydroxyacetone contacts are provided by residues 56–59, lysine 109, and aspartate 114; that span reads GSGH. Residue histidine 221 is the Tele-hemiaminal-histidine intermediate of the active site. The disordered stretch occupies residues 348–367; the sequence is KRSRVAPAEPQEAPDSTAAG. A Phosphoserine modification is found at serine 350. The DhaL domain maps to 372-571; that stretch reads KRMALVLERV…AAAILRAILE (200 aa). ATP contacts are provided by residues 401–404, 446–447, glycine 486, and 494–495; these read DGDC, SS, and TM. A phosphoserine mark is found at serine 511 and serine 545. Residue 556–558 coordinates ATP; it reads DPG.

This sequence belongs to the dihydroxyacetone kinase (DAK) family. In terms of assembly, homodimer. Interacts with IFIH1 (via the CARD domains), the interaction is inhibited by viral infection. Mg(2+) is required as a cofactor. Mn(2+) serves as cofactor. It depends on Co(2+) as a cofactor. As to expression, detected in erythrocytes (at protein level).

The catalysed reaction is dihydroxyacetone + ATP = dihydroxyacetone phosphate + ADP + H(+). It catalyses the reaction D-glyceraldehyde + ATP = D-glyceraldehyde 3-phosphate + ADP + H(+). The enzyme catalyses FAD = riboflavin cyclic-4',5'-phosphate + AMP + H(+). With respect to regulation, each activity is inhibited by the substrate(s) of the other. Its function is as follows. Catalyzes both the phosphorylation of dihydroxyacetone and of glyceraldehyde, and the splitting of ribonucleoside diphosphate-X compounds among which FAD is the best substrate. Represses IFIH1-mediated cellular antiviral response. This Homo sapiens (Human) protein is Triokinase/FMN cyclase.